Reading from the N-terminus, the 180-residue chain is Large ribosomal subunit protein uL5 (180 aa).

The protein belongs to the universal ribosomal protein uL5 family. Part of the 50S ribosomal subunit; part of the 5S rRNA/L5/L18/L25 subcomplex. Contacts the 5S rRNA and the P site tRNA. Forms a bridge to the 30S subunit in the 70S ribosome.

Its function is as follows. This is one of the proteins that bind and probably mediate the attachment of the 5S RNA into the large ribosomal subunit, where it forms part of the central protuberance. In the 70S ribosome it contacts protein S13 of the 30S subunit (bridge B1b), connecting the 2 subunits; this bridge is implicated in subunit movement. Contacts the P site tRNA; the 5S rRNA and some of its associated proteins might help stabilize positioning of ribosome-bound tRNAs. The sequence is that of Large ribosomal subunit protein uL5 from Acholeplasma laidlawii (strain PG-8A).